Here is a 393-residue protein sequence, read N- to C-terminus: CCA-adding enzyme (393 aa).

2 residues coordinate ATP: Gly27 and Arg30. The CTP site is built by Gly27 and Arg30. Residues Asp40 and Asp42 each contribute to the Mg(2+) site. Residues Arg111, Asp154, Arg157, Arg160, and Arg163 each contribute to the ATP site. Positions 111, 154, 157, 160, and 163 each coordinate CTP.

The protein belongs to the tRNA nucleotidyltransferase/poly(A) polymerase family. Bacterial CCA-adding enzyme type 3 subfamily. Homodimer. Requires Mg(2+) as cofactor.

The catalysed reaction is a tRNA precursor + 2 CTP + ATP = a tRNA with a 3' CCA end + 3 diphosphate. It carries out the reaction a tRNA with a 3' CCA end + 2 CTP + ATP = a tRNA with a 3' CCACCA end + 3 diphosphate. Its function is as follows. Catalyzes the addition and repair of the essential 3'-terminal CCA sequence in tRNAs without using a nucleic acid template. Adds these three nucleotides in the order of C, C, and A to the tRNA nucleotide-73, using CTP and ATP as substrates and producing inorganic pyrophosphate. tRNA 3'-terminal CCA addition is required both for tRNA processing and repair. Also involved in tRNA surveillance by mediating tandem CCA addition to generate a CCACCA at the 3' terminus of unstable tRNAs. While stable tRNAs receive only 3'-terminal CCA, unstable tRNAs are marked with CCACCA and rapidly degraded. The protein is CCA-adding enzyme of Listeria monocytogenes serotype 4b (strain F2365).